Reading from the N-terminus, the 163-residue chain is Early nodulin-like protein 20 (163 aa).

The N-terminal stretch at 1-25 (MMGKYLWALVYVTVMILIIVVEVES) is a signal peptide. One can recognise a Phytocyanin domain in the interval 26-126 (SLHRVGGGRY…GMKLAITVLP (101 aa)). Residues Asn42, Asn63, Asn73, Asn88, and Asn135 are each glycosylated (N-linked (GlcNAc...) asparagine). Cys80 and Cys114 are disulfide-bonded. The GPI-anchor amidated serine moiety is linked to residue Ser138. A propeptide spans 139-163 (TTTPLIPPNAITAAILIFAFKALLL) (removed in mature form).

The protein belongs to the early nodulin-like (ENODL) family.

The protein localises to the cell membrane. Functionally, may act as a carbohydrate transporter. The sequence is that of Early nodulin-like protein 20 from Arabidopsis thaliana (Mouse-ear cress).